The sequence spans 85 residues: UPF0297 protein Cbei_1105 (85 aa).

It belongs to the UPF0297 family.

This is UPF0297 protein Cbei_1105 from Clostridium beijerinckii (strain ATCC 51743 / NCIMB 8052) (Clostridium acetobutylicum).